A 195-amino-acid polypeptide reads, in one-letter code: Probable nicotinate-nucleotide adenylyltransferase (195 aa).

Belongs to the NadD family.

It carries out the reaction nicotinate beta-D-ribonucleotide + ATP + H(+) = deamido-NAD(+) + diphosphate. It participates in cofactor biosynthesis; NAD(+) biosynthesis; deamido-NAD(+) from nicotinate D-ribonucleotide: step 1/1. In terms of biological role, catalyzes the reversible adenylation of nicotinate mononucleotide (NaMN) to nicotinic acid adenine dinucleotide (NaAD). This is Probable nicotinate-nucleotide adenylyltransferase from Chlorobaculum parvum (strain DSM 263 / NCIMB 8327) (Chlorobium vibrioforme subsp. thiosulfatophilum).